Consider the following 343-residue polypeptide: Anthranilate phosphoribosyltransferase (343 aa).

Residues G84, 87–88 (GD), T92, 94–97 (NIST), 112–120 (KHGNRSVSS), and S124 each bind 5-phospho-alpha-D-ribose 1-diphosphate. G84 is an anthranilate binding site. Residue S96 coordinates Mg(2+). N115 lines the anthranilate pocket. Residue R170 coordinates anthranilate. Mg(2+) contacts are provided by D229 and E230.

This sequence belongs to the anthranilate phosphoribosyltransferase family. Homodimer. Mg(2+) serves as cofactor.

The catalysed reaction is N-(5-phospho-beta-D-ribosyl)anthranilate + diphosphate = 5-phospho-alpha-D-ribose 1-diphosphate + anthranilate. It functions in the pathway amino-acid biosynthesis; L-tryptophan biosynthesis; L-tryptophan from chorismate: step 2/5. Catalyzes the transfer of the phosphoribosyl group of 5-phosphorylribose-1-pyrophosphate (PRPP) to anthranilate to yield N-(5'-phosphoribosyl)-anthranilate (PRA). The sequence is that of Anthranilate phosphoribosyltransferase from Stenotrophomonas maltophilia (strain K279a).